The sequence spans 35 residues: Dermonecrotic toxin LrSicTox-alphaI-1 (35 aa).

His11 is an active-site residue. Position 33 (Asp33) interacts with Mg(2+).

Belongs to the arthropod phospholipase D family. Class II subfamily. It depends on Mg(2+) as a cofactor. In terms of processing, contains 2 disulfide bonds. As to expression, expressed by the venom gland.

Its subcellular location is the secreted. It carries out the reaction an N-(acyl)-sphingosylphosphocholine = an N-(acyl)-sphingosyl-1,3-cyclic phosphate + choline. The catalysed reaction is an N-(acyl)-sphingosylphosphoethanolamine = an N-(acyl)-sphingosyl-1,3-cyclic phosphate + ethanolamine. The enzyme catalyses a 1-acyl-sn-glycero-3-phosphocholine = a 1-acyl-sn-glycero-2,3-cyclic phosphate + choline. It catalyses the reaction a 1-acyl-sn-glycero-3-phosphoethanolamine = a 1-acyl-sn-glycero-2,3-cyclic phosphate + ethanolamine. In terms of biological role, dermonecrotic toxins cleave the phosphodiester linkage between the phosphate and headgroup of certain phospholipids (sphingolipid and lysolipid substrates), forming an alcohol (often choline) and a cyclic phosphate. This toxin acts on sphingomyelin (SM). It may also act on ceramide phosphoethanolamine (CPE), lysophosphatidylcholine (LPC) and lysophosphatidylethanolamine (LPE), but not on lysophosphatidylserine (LPS), and lysophosphatidylglycerol (LPG). It acts by transphosphatidylation, releasing exclusively cyclic phosphate products as second products. Induces dermonecrosis, hemolysis, increased vascular permeability, edema, inflammatory response, and platelet aggregation. The sequence is that of Dermonecrotic toxin LrSicTox-alphaI-1 from Loxosceles reclusa (Brown recluse spider).